Reading from the N-terminus, the 398-residue chain is Methionine aminopeptidase 1A (398 aa).

Ala-2 is modified (N-acetylalanine). The C6H2-type zinc finger occupies 12-65 (TLSCARCEKPAHLQCPKCIDLKLPREQASFCTQECFKAAWSSHKSVHVKAQLSS). Cys-15, Cys-18, Cys-26, Cys-29, Cys-42, Cys-46, His-54, and His-58 together coordinate Zn(2+). His-214 provides a ligand contact to a protein. Positions 231, 242, and 305 each coordinate Zn(2+). Position 312 (His-312) interacts with a protein. Zn(2+)-binding residues include Glu-338 and Glu-369.

It belongs to the peptidase M24A family. Methionine aminopeptidase type 1 subfamily. In terms of assembly, associates with the 60S ribosomal subunit of the 80S translational complex. Zn(2+) is required as a cofactor. It depends on Co(2+) as a cofactor. Mn(2+) serves as cofactor. Requires Fe(2+) as cofactor. As to expression, ubiquitous.

Its subcellular location is the cytoplasm. The catalysed reaction is Release of N-terminal amino acids, preferentially methionine, from peptides and arylamides.. Its function is as follows. Cotranslationally removes the N-terminal methionine from nascent proteins. The N-terminal methionine is often cleaved when the second residue in the primary sequence is small and uncharged (Met-Ala-, Cys, Gly, Pro, Ser, Thr, or Val). This Arabidopsis thaliana (Mouse-ear cress) protein is Methionine aminopeptidase 1A (MAP1A).